A 449-amino-acid polypeptide reads, in one-letter code: Hyaluronidase-1 (449 aa).

Positions 1–39 (MKPFSPEVSPDPCPATAAHLLRTYTLFLTLLELAQGCRG) are cleaved as a signal peptide. 2 disulfides stabilise this stretch: Cys-58-Cys-348 and Cys-222-Cys-236. Residues Asn-85 and Asn-114 are each glycosylated (N-linked (GlcNAc...) asparagine). The active-site Proton donor is Glu-146. N-linked (GlcNAc...) asparagine glycans are attached at residues Asn-231, Asn-252, and Asn-365. Cystine bridges form between Cys-373–Cys-384, Cys-378–Cys-433, and Cys-435–Cys-444. One can recognise an EGF-like domain in the interval 433-444 (CRCYRGWSGEWC).

The protein belongs to the glycosyl hydrolase 56 family.

Its subcellular location is the secreted. It is found in the lysosome. The enzyme catalyses Random hydrolysis of (1-&gt;4)-linkages between N-acetyl-beta-D-glucosamine and D-glucuronate residues in hyaluronate.. May have a role in promoting tumor progression. May block the TGFB1-enhanced cell growth. Overexpression of HYAL1 suppressed the growth rate of colon carcinoma cell tumors in an experimental model. This chain is Hyaluronidase-1 (Hyal1), found in Rattus norvegicus (Rat).